Consider the following 213-residue polypeptide: Orotate phosphoribosyltransferase (213 aa).

5-phospho-alpha-D-ribose 1-diphosphate is bound at residue K26. 34–35 (FF) lines the orotate pocket. 5-phospho-alpha-D-ribose 1-diphosphate contacts are provided by residues 72–73 (YK), R99, K100, K103, H105, and 124–132 (DDVITAGTA). Orotate is bound by residues T128 and R156.

It belongs to the purine/pyrimidine phosphoribosyltransferase family. PyrE subfamily. In terms of assembly, homodimer. The cofactor is Mg(2+).

The enzyme catalyses orotidine 5'-phosphate + diphosphate = orotate + 5-phospho-alpha-D-ribose 1-diphosphate. It participates in pyrimidine metabolism; UMP biosynthesis via de novo pathway; UMP from orotate: step 1/2. Functionally, catalyzes the transfer of a ribosyl phosphate group from 5-phosphoribose 1-diphosphate to orotate, leading to the formation of orotidine monophosphate (OMP). This chain is Orotate phosphoribosyltransferase, found in Haemophilus influenzae (strain ATCC 51907 / DSM 11121 / KW20 / Rd).